Reading from the N-terminus, the 161-residue chain is Phosphopantetheine adenylyltransferase (161 aa).

S11 serves as a coordination point for substrate. ATP is bound by residues 11-12 (SF) and H19. Positions 43, 75, and 89 each coordinate substrate. Residues 90 to 92 (GLR), E100, and 125 to 131 (YSFISSS) each bind ATP.

Belongs to the bacterial CoaD family. In terms of assembly, homohexamer. Requires Mg(2+) as cofactor.

It is found in the cytoplasm. It catalyses the reaction (R)-4'-phosphopantetheine + ATP + H(+) = 3'-dephospho-CoA + diphosphate. The protein operates within cofactor biosynthesis; coenzyme A biosynthesis; CoA from (R)-pantothenate: step 4/5. Reversibly transfers an adenylyl group from ATP to 4'-phosphopantetheine, yielding dephospho-CoA (dPCoA) and pyrophosphate. The protein is Phosphopantetheine adenylyltransferase of Staphylococcus epidermidis (strain ATCC 35984 / DSM 28319 / BCRC 17069 / CCUG 31568 / BM 3577 / RP62A).